The sequence spans 146 residues: Deoxyuridine 5'-triphosphate nucleotidohydrolase (146 aa).

Residues 60–62 (RSG), N73, and 77–79 (VID) contribute to the substrate site.

The protein belongs to the dUTPase family. Mg(2+) is required as a cofactor.

It carries out the reaction dUTP + H2O = dUMP + diphosphate + H(+). Its pathway is pyrimidine metabolism; dUMP biosynthesis; dUMP from dCTP (dUTP route): step 2/2. This enzyme is involved in nucleotide metabolism: it produces dUMP, the immediate precursor of thymidine nucleotides and it decreases the intracellular concentration of dUTP so that uracil cannot be incorporated into DNA. This Tropheryma whipplei (strain TW08/27) (Whipple's bacillus) protein is Deoxyuridine 5'-triphosphate nucleotidohydrolase.